We begin with the raw amino-acid sequence, 465 residues long: MFTKTQILALALSIASAEAVSKGFNYGANKPDGTLKVQADFEAEFRTAKNLETTSGFNSARLYTMIQGTGSTPISAIPAAIAEETTLLLGLWASGGNMDNEIAALKAAINQYGDEFAKLVVGISVGSEDLYRNSEIGVQANAGIGIEPEELVSYIQRVREAIAGTALSGAPIGHVDTWNAWTNGSNAAVAEAVDWLGFDGYPFFQNTMQNSIDDAKALFDESVQKTKAVAGNKEVWITETGWPVSGDSQNLAIASVENAKQFWDEVGCPLFDNVNTWWYILQDASGSSVPNPSFGIVGNTLSTTPLFDLSCSASSKKNSSSASASASGSSAQSTGFVSTTKPAASPSGSSGLGHGGSLGSSGSFSGGHYAGVGSSSVIASPSATPSGSAVPGSSSGPGSSSGSASGSSSGFGSGAAADSTSGTSTSGDSTSSTSATPADFTGAGSRLSGSIFGAAMLVAALAVAL.

A signal peptide spans 1–19; the sequence is MFTKTQILALALSIASAEA. Glutamate 128 serves as the catalytic Proton donor. Asparagine 183 is a glycosylation site (N-linked (GlcNAc...) asparagine). Glutamate 239 acts as the Nucleophile in catalysis. N-linked (GlcNAc...) asparagine glycosylation occurs at asparagine 318. 2 stretches are compositionally biased toward low complexity: residues 320–333 and 380–438; these read SSASASASGSSAQS and SPSA…ATPA. Disordered stretches follow at residues 320–356 and 380–440; these read SSASASASGSSAQSTGFVSTTKPAASPSGSSGLGHGG and SPSA…PADF. The GPI-anchor amidated glycine moiety is linked to residue glycine 442. A propeptide spans 443-465 (removed in mature form); the sequence is AGSRLSGSIFGAAMLVAALAVAL.

Belongs to the glycosyl hydrolase 17 family. In terms of processing, the GPI-anchor is attached to the protein in the endoplasmic reticulum and serves to target the protein to the cell surface. There, the glucosamine-inositol phospholipid moiety is cleaved off and the GPI-modified mannoprotein is covalently attached via its lipidless GPI glycan remnant to the 1,6-beta-glucan of the outer cell wall layer.

Its subcellular location is the cell membrane. The protein localises to the secreted. The protein resides in the cell wall. It carries out the reaction Hydrolysis of (1-&gt;3)-beta-D-glucosidic linkages in (1-&gt;3)-beta-D-glucans.. Glucanases play a role in cell expansion during growth, in cell-cell fusion during mating, and in spore release during sporulation. This enzyme may be involved in beta-glucan degradation and also function biosynthetically as a transglycosylase. The chain is Probable glucan endo-1,3-beta-glucosidase eglC (eglC) from Emericella nidulans (strain FGSC A4 / ATCC 38163 / CBS 112.46 / NRRL 194 / M139) (Aspergillus nidulans).